We begin with the raw amino-acid sequence, 306 residues long: Ribonuclease H2 subunit B (306 aa).

Residues leucine 232–lysine 285 are disordered. The segment covering aspartate 259–asparagine 269 has biased composition (basic and acidic residues).

It belongs to the RNase H2 subunit B family. In terms of assembly, the RNase H2 complex is a heterotrimer composed of the catalytic subunit rnaseh2a and the non-catalytic subunits rnaseh2b and rnaseh2c.

The protein localises to the nucleus. In terms of biological role, non catalytic subunit of RNase H2, an endonuclease that specifically degrades the RNA of RNA:DNA hybrids. Participates in DNA replication, possibly by mediating the removal of lagging-strand Okazaki fragment RNA primers during DNA replication. Mediates the excision of single ribonucleotides from DNA:RNA duplexes. The sequence is that of Ribonuclease H2 subunit B (rnaseh2b) from Xenopus tropicalis (Western clawed frog).